A 1209-amino-acid chain; its full sequence is DNA-directed RNA polymerase subunit beta' (1209 aa).

C60, C62, C75, and C78 together coordinate Zn(2+). Mg(2+) contacts are provided by D450, D452, and D454. Zn(2+) contacts are provided by C819, C893, C900, and C903.

Belongs to the RNA polymerase beta' chain family. In terms of assembly, the RNAP catalytic core consists of 2 alpha, 1 beta, 1 beta' and 1 omega subunit. When a sigma factor is associated with the core the holoenzyme is formed, which can initiate transcription. The cofactor is Mg(2+). Zn(2+) serves as cofactor.

The enzyme catalyses RNA(n) + a ribonucleoside 5'-triphosphate = RNA(n+1) + diphosphate. In terms of biological role, DNA-dependent RNA polymerase catalyzes the transcription of DNA into RNA using the four ribonucleoside triphosphates as substrates. This is DNA-directed RNA polymerase subunit beta' from Streptococcus mutans serotype c (strain ATCC 700610 / UA159).